The chain runs to 337 residues: 2-oxoglutarate receptor 1 (337 aa).

Topologically, residues 1–37 are extracellular; that stretch reads MIETLDSPANDSDFLDYITALENCTDEQISFKMQYLP. Residue Asn23 is glycosylated (N-linked (GlcNAc...) asparagine). Residues 38–58 traverse the membrane as a helical segment; the sequence is VIYSIIFLVGFPGNTVAISIY. Over 59–69 the chain is Cytoplasmic; that stretch reads VFKMRPWKSST. The helical transmembrane segment at 70-90 threads the bilayer; the sequence is IIMLNLALTDLLYLTSLPFLI. Over 91-116 the chain is Extracellular; that stretch reads HYYASGENWIFGDFMCKFIRFGFHFN. Cys106 and Cys183 are oxidised to a cystine. A helical membrane pass occupies residues 117–137; it reads LYSSILFLTCFSLFRYIVIIH. Over 138 to 151 the chain is Cytoplasmic; the sequence is PMSCFSIQKTRWAV. The helical transmembrane segment at 152–172 threads the bilayer; sequence VACAGVWVISLVAVMPMTFLI. Residues 173-200 are Extracellular-facing; the sequence is TSTTRTNRSACLDLTSSDDLTTIKWYNL. A helical transmembrane segment spans residues 201-221; sequence ILTATTFCLPLLIVTLCYTTI. Over 222 to 242 the chain is Cytoplasmic; sequence ISTLTHGPRTHSCFKQKARRL. A helical membrane pass occupies residues 243–263; it reads TILLLLVFYVCFLPFHILRVI. Over 264–284 the chain is Extracellular; sequence RIESRLLSISCSIESHIHEAY. The helical transmembrane segment at 285-305 threads the bilayer; that stretch reads IVSRPLAALNTFGNLLLYVVV. The Cytoplasmic segment spans residues 306 to 337; the sequence is SNNFQQAFCSAVRCKAIGDLEQAKKDSCSNNP.

The protein belongs to the G-protein coupled receptor 1 family. In terms of tissue distribution, highly expressed in mast cells and is found predominantly in the tissues of the respiratory tract and kidneys.

It is found in the cell membrane. Its function is as follows. G protein-coupled receptor for dicarboxylates and amino dicarboxylates. Receptor for itaconate, a metabolite produced by myeloid lineages. In the respiratory epithelium, couples the binding of itaconate to the activation of GNA11 and downstream intracellular Ca(2+) release, leading to mucocilliary clearance of airborne pathogens. Receptor for leukotriene E4 (LTE4) produced by mast cells upon allergic inflammation. Binds with high affinity to LTE4 and elicits mucin release from pulmonary epithelium in response to airborne fungi allergens. Regulates mucin-producing goblet cell homeostasis. Receptor for alpha-ketoglutarate produced by proximal tubule renal cells upon metabolic alkalosis. In an intrarenal paracrine signaling pathway, binds alpha-ketoglutarate and drives transepithelial salt reabsorption and bicarbonate secretion by SLC26A4/pendrin-positive intercalated cells. This is 2-oxoglutarate receptor 1 (Oxgr1) from Rattus norvegicus (Rat).